The primary structure comprises 179 residues: Large ribosomal subunit protein uL6 (179 aa).

The protein belongs to the universal ribosomal protein uL6 family. Part of the 50S ribosomal subunit.

Functionally, this protein binds to the 23S rRNA, and is important in its secondary structure. It is located near the subunit interface in the base of the L7/L12 stalk, and near the tRNA binding site of the peptidyltransferase center. The polypeptide is Large ribosomal subunit protein uL6 (Pseudomonas savastanoi pv. phaseolicola (strain 1448A / Race 6) (Pseudomonas syringae pv. phaseolicola (strain 1448A / Race 6))).